We begin with the raw amino-acid sequence, 209 residues long: Uracil phosphoribosyltransferase (209 aa).

5-phospho-alpha-D-ribose 1-diphosphate is bound by residues R79, R104, and 131-139 (DPMLATGGS). Uracil contacts are provided by residues I194 and 199–201 (GDA). D200 provides a ligand contact to 5-phospho-alpha-D-ribose 1-diphosphate.

It belongs to the UPRTase family. Mg(2+) serves as cofactor.

The enzyme catalyses UMP + diphosphate = 5-phospho-alpha-D-ribose 1-diphosphate + uracil. It participates in pyrimidine metabolism; UMP biosynthesis via salvage pathway; UMP from uracil: step 1/1. Allosterically activated by GTP. Functionally, catalyzes the conversion of uracil and 5-phospho-alpha-D-ribose 1-diphosphate (PRPP) to UMP and diphosphate. This is Uracil phosphoribosyltransferase from Levilactobacillus brevis (strain ATCC 367 / BCRC 12310 / CIP 105137 / JCM 1170 / LMG 11437 / NCIMB 947 / NCTC 947) (Lactobacillus brevis).